The primary structure comprises 421 residues: TITAN-like protein (421 aa).

The C2H2-type 1; degenerate zinc-finger motif lies at 11–32 (EFCTVCRFHHDQGSRHKYFPRH). The C2H2-type 2; degenerate zinc finger occupies 70-100 (VWCVFCDEDIVELGSSFACSKAINHFASSDH). Positions 279 to 306 (ISSSHSTDAGGNVHSGAPPPWLDANDGD) are disordered. 2 consecutive short sequence motifs (nuclear localization signal) follow at residues 328 to 335 (NRKLNPNR) and 377 to 384 (TRKESRKE). A disordered region spans residues 376 to 421 (GTRKESRKEFEKEKRKLVKTESISTESEPVKIQPYISKRARRESGE). Over residues 377 to 389 (TRKESRKEFEKEK) the composition is skewed to basic and acidic residues.

As to expression, also present in cotyledons, hypocotyls, stems, veins of sepals and stigmas, and actively dividing tissues such as shoot apical meristem, root tips and emerging true leaves. Weak expression in petals and anthers, and not detected in mature leaves. In seeds, expressed in both the endosperm and embryo.

It is found in the nucleus. Key regulator for endosperm and embryo nuclear divisions. This Arabidopsis thaliana (Mouse-ear cress) protein is TITAN-like protein.